Consider the following 225-residue polypeptide: Urease accessory protein UreF (225 aa).

The protein belongs to the UreF family. As to quaternary structure, ureD, UreF and UreG form a complex that acts as a GTP-hydrolysis-dependent molecular chaperone, activating the urease apoprotein by helping to assemble the nickel containing metallocenter of UreC. The UreE protein probably delivers the nickel.

The protein resides in the cytoplasm. Its function is as follows. Required for maturation of urease via the functional incorporation of the urease nickel metallocenter. This is Urease accessory protein UreF from Arthrobacter sp. (strain FB24).